The chain runs to 333 residues: Flotillin-like protein FloA (333 aa).

The chain crosses the membrane as a helical span at residues 9–29 (IVLIVGGIIFLILFFHYVPFF).

This sequence belongs to the flotillin-like FloA family. Homooligomerizes.

The protein resides in the cell membrane. It is found in the membrane raft. Functionally, found in functional membrane microdomains (FMM) that may be equivalent to eukaryotic membrane rafts. FMMs are highly dynamic and increase in number as cells age. Flotillins are thought to be important factors in membrane fluidity. The protein is Flotillin-like protein FloA of Bacteroides thetaiotaomicron (strain ATCC 29148 / DSM 2079 / JCM 5827 / CCUG 10774 / NCTC 10582 / VPI-5482 / E50).